The primary structure comprises 329 residues: Mitochondrial glycine transporter (329 aa).

3 Solcar repeats span residues 19–103 (SKTT…LRQP), 130–214 (LSNW…LKRH), and 232–316 (SSSS…LILR). The next 6 membrane-spanning stretches (helical) occupy residues 25–50 (FAAG…TRVQ), 78–104 (GTLP…RQPL), 136–161 (LGTG…VRYE), 189–212 (GFGA…EQLK), 236–262 (INFI…KTRL), and 291–309 (GLGL…AWTV).

It belongs to the mitochondrial carrier (TC 2.A.29) family. SLC25A38 subfamily.

Its subcellular location is the mitochondrion inner membrane. The catalysed reaction is glycine(in) = glycine(out). Its function is as follows. Mitochondrial glycine transporter that imports glycine into the mitochondrial matrix. Plays an important role in providing glycine for the first enzymatic step in heme biosynthesis, the condensation of glycine with succinyl-CoA to produce 5-aminolevulinate (ALA) in the mitochondrial matrix. This chain is Mitochondrial glycine transporter, found in Aspergillus terreus (strain NIH 2624 / FGSC A1156).